The sequence spans 359 residues: Phosphoserine aminotransferase (359 aa).

Arg-41 provides a ligand contact to L-glutamate. Residues 75 to 76 (AS), Trp-101, Thr-152, Asp-171, and Gln-194 each bind pyridoxal 5'-phosphate. Position 195 is an N6-(pyridoxal phosphate)lysine (Lys-195). Residue 236–237 (NT) coordinates pyridoxal 5'-phosphate.

This sequence belongs to the class-V pyridoxal-phosphate-dependent aminotransferase family. SerC subfamily. As to quaternary structure, homodimer. Pyridoxal 5'-phosphate is required as a cofactor.

Its subcellular location is the cytoplasm. The catalysed reaction is O-phospho-L-serine + 2-oxoglutarate = 3-phosphooxypyruvate + L-glutamate. The enzyme catalyses 4-(phosphooxy)-L-threonine + 2-oxoglutarate = (R)-3-hydroxy-2-oxo-4-phosphooxybutanoate + L-glutamate. It participates in amino-acid biosynthesis; L-serine biosynthesis; L-serine from 3-phospho-D-glycerate: step 2/3. Its pathway is cofactor biosynthesis; pyridoxine 5'-phosphate biosynthesis; pyridoxine 5'-phosphate from D-erythrose 4-phosphate: step 3/5. Its function is as follows. Catalyzes the reversible conversion of 3-phosphohydroxypyruvate to phosphoserine and of 3-hydroxy-2-oxo-4-phosphonooxybutanoate to phosphohydroxythreonine. The polypeptide is Phosphoserine aminotransferase (Acinetobacter baylyi (strain ATCC 33305 / BD413 / ADP1)).